The sequence spans 289 residues: MAAAILDGRALAAQRRQQLREQVEAIAPAVGRRPGLAVIMVGDNPASAVYVRNKERACEQTGIVSFGKHLPGDSSEAEIRALIEELNQDDRVDGILVQLPLPSHLDAVPLLLAIDPEKDADGLHPLNLGRLLRGEEGLRSCTPAGVMELLAANQIDPAGKKAVVIGRSILVGKPLAMMLLEANATVTIAHSRTPNLPEVCRQADIVVAAVGRPELVGADWIKPGAVVVDVGINRLEDGRLVGDVDYEAASAITSWITPVPGGVGPMTVAMLLHNTVLSYCRRSGQPFLS.

Residues 166-168 (GRS), Ser-191, and Ile-232 each bind NADP(+).

The protein belongs to the tetrahydrofolate dehydrogenase/cyclohydrolase family. As to quaternary structure, homodimer.

It catalyses the reaction (6R)-5,10-methylene-5,6,7,8-tetrahydrofolate + NADP(+) = (6R)-5,10-methenyltetrahydrofolate + NADPH. The catalysed reaction is (6R)-5,10-methenyltetrahydrofolate + H2O = (6R)-10-formyltetrahydrofolate + H(+). It participates in one-carbon metabolism; tetrahydrofolate interconversion. Catalyzes the oxidation of 5,10-methylenetetrahydrofolate to 5,10-methenyltetrahydrofolate and then the hydrolysis of 5,10-methenyltetrahydrofolate to 10-formyltetrahydrofolate. This chain is Bifunctional protein FolD, found in Synechococcus elongatus (strain ATCC 33912 / PCC 7942 / FACHB-805) (Anacystis nidulans R2).